Here is a 165-residue protein sequence, read N- to C-terminus: Cyanate hydratase (165 aa).

Active-site residues include Arg-106, Glu-109, and Ser-132.

Belongs to the cyanase family.

The catalysed reaction is cyanate + hydrogencarbonate + 3 H(+) = NH4(+) + 2 CO2. In terms of biological role, catalyzes the reaction of cyanate with bicarbonate to produce ammonia and carbon dioxide. The polypeptide is Cyanate hydratase (Laccaria bicolor (strain S238N-H82 / ATCC MYA-4686) (Bicoloured deceiver)).